Consider the following 233-residue polypeptide: Translation initiation factor IF-3 (233 aa).

Disordered stretches follow at residues 1-21 and 184-233; these read MAIQ…RTNR and LQSQ…AAQR. Over residues 193–211 the composition is skewed to low complexity; the sequence is AAAAAAPAAAPAAPAAGAP. Residues 212 to 223 show a composition bias toward pro residues; sequence APAPAPAAPAPA. Residues 224 to 233 show a composition bias toward low complexity; the sequence is PAAADPAAQR.

This sequence belongs to the IF-3 family. As to quaternary structure, monomer.

Its subcellular location is the cytoplasm. Functionally, IF-3 binds to the 30S ribosomal subunit and shifts the equilibrium between 70S ribosomes and their 50S and 30S subunits in favor of the free subunits, thus enhancing the availability of 30S subunits on which protein synthesis initiation begins. This Anaeromyxobacter dehalogenans (strain 2CP-C) protein is Translation initiation factor IF-3.